The primary structure comprises 348 residues: Phenylalanine--tRNA ligase alpha subunit (348 aa).

Mg(2+) is bound at residue E259.

The protein belongs to the class-II aminoacyl-tRNA synthetase family. Phe-tRNA synthetase alpha subunit type 1 subfamily. In terms of assembly, tetramer of two alpha and two beta subunits. Mg(2+) is required as a cofactor.

It is found in the cytoplasm. The catalysed reaction is tRNA(Phe) + L-phenylalanine + ATP = L-phenylalanyl-tRNA(Phe) + AMP + diphosphate + H(+). The protein is Phenylalanine--tRNA ligase alpha subunit of Latilactobacillus sakei subsp. sakei (strain 23K) (Lactobacillus sakei subsp. sakei).